Consider the following 301-residue polypeptide: GTPase Era (301 aa).

The Era-type G domain maps to 4 to 173 (KAGFVALIGK…LECISQHLSP (170 aa)). Residues 12 to 19 (GKPNAGKS) are G1. 12–19 (GKPNAGKS) is a GTP binding site. The interval 38–42 (NATRK) is G2. Residues 64-67 (DTPG) form a G3 region. GTP contacts are provided by residues 64 to 68 (DTPGL) and 122 to 125 (SKID). A G4 region spans residues 122 to 125 (SKID). The segment at 152 to 154 (LSA) is G5. The 77-residue stretch at 204-280 (LSDEIPYESD…FLNLQVIAQK (77 aa)) folds into the KH type-2 domain.

Belongs to the TRAFAC class TrmE-Era-EngA-EngB-Septin-like GTPase superfamily. Era GTPase family. In terms of assembly, monomer.

The protein localises to the cytoplasm. It is found in the cell inner membrane. Its function is as follows. An essential GTPase that binds both GDP and GTP, with rapid nucleotide exchange. Plays a role in 16S rRNA processing and 30S ribosomal subunit biogenesis and possibly also in cell cycle regulation and energy metabolism. This chain is GTPase Era, found in Helicobacter pylori (strain ATCC 700392 / 26695) (Campylobacter pylori).